A 311-amino-acid polypeptide reads, in one-letter code: tRNA-cytidine(32) 2-sulfurtransferase (311 aa).

The short motif at 47–52 (SGGKDS) is the PP-loop motif element. [4Fe-4S] cluster contacts are provided by cysteine 122, cysteine 125, and cysteine 213.

Belongs to the TtcA family. Homodimer. Requires Mg(2+) as cofactor. [4Fe-4S] cluster is required as a cofactor.

The protein localises to the cytoplasm. It carries out the reaction cytidine(32) in tRNA + S-sulfanyl-L-cysteinyl-[cysteine desulfurase] + AH2 + ATP = 2-thiocytidine(32) in tRNA + L-cysteinyl-[cysteine desulfurase] + A + AMP + diphosphate + H(+). It functions in the pathway tRNA modification. Its function is as follows. Catalyzes the ATP-dependent 2-thiolation of cytidine in position 32 of tRNA, to form 2-thiocytidine (s(2)C32). The sulfur atoms are provided by the cysteine/cysteine desulfurase (IscS) system. In Salmonella typhi, this protein is tRNA-cytidine(32) 2-sulfurtransferase.